The chain runs to 328 residues: Alcohol-sensitive RING finger protein 1 (328 aa).

Residues 18-61 (CSICWESMPSGVGRLMPCGHEYHLACIRKWFHLHSGNRSCPVCR) form an RING-type 1; atypical zinc finger. An RING-type 2; atypical zinc finger spans residues 129–177 (CGICGEMNGDIDTCCNRCHHMYHHSCLGQLLVEVNAEREQGWSHCIFCY).

It is found in the cytoplasm. The protein localises to the nucleus. Functionally, required for tolerance to alcohol. The polypeptide is Alcohol-sensitive RING finger protein 1 (ASR1) (Eremothecium gossypii (strain ATCC 10895 / CBS 109.51 / FGSC 9923 / NRRL Y-1056) (Yeast)).